Consider the following 762-residue polypeptide: 5-methyltetrahydropteroyltriglutamate--homocysteine methyltransferase (762 aa).

5-methyltetrahydropteroyltri-L-glutamate is bound by residues 17 to 20 (REWK) and K111. L-homocysteine contacts are provided by residues 435-437 (IGS) and E488. L-methionine-binding positions include 435 to 437 (IGS) and E488. Residues 519–520 (RC) and W565 contribute to the 5-methyltetrahydropteroyltri-L-glutamate site. An L-homocysteine-binding site is contributed by D603. D603 is an L-methionine binding site. E609 is a binding site for 5-methyltetrahydropteroyltri-L-glutamate. The Zn(2+) site is built by H645, C647, and E669. H698 (proton donor) is an active-site residue. Residue C730 coordinates Zn(2+).

The protein belongs to the vitamin-B12 independent methionine synthase family. It depends on Zn(2+) as a cofactor.

The catalysed reaction is 5-methyltetrahydropteroyltri-L-glutamate + L-homocysteine = tetrahydropteroyltri-L-glutamate + L-methionine. The protein operates within amino-acid biosynthesis; L-methionine biosynthesis via de novo pathway; L-methionine from L-homocysteine (MetE route): step 1/1. Catalyzes the transfer of a methyl group from 5-methyltetrahydrofolate to homocysteine resulting in methionine formation. This is 5-methyltetrahydropteroyltriglutamate--homocysteine methyltransferase from Bacillus cereus (strain G9842).